A 402-amino-acid polypeptide reads, in one-letter code: p-cumate 2,3-dioxygenase system, ferredoxin--NAD(+) reductase component (402 aa).

FAD contacts are provided by Ala-16, Lys-51, Val-83, Arg-131, and Asp-275.

The protein belongs to the FAD-dependent oxidoreductase family. In terms of assembly, the p-cumate 2,3-dioxygenase multicomponent enzyme system is composed of an electron transfer component and a dioxygenase component (iron sulfur protein (ISP)). The electron transfer component is composed of a ferredoxin reductase (CmtAa) and a ferredoxin (CmtAd), and the dioxygenase component is formed of a large alpha subunit (CmtAb) and a small beta subunit (CmtAc). FAD is required as a cofactor.

It carries out the reaction 2 reduced [2Fe-2S]-[ferredoxin] + NAD(+) + H(+) = 2 oxidized [2Fe-2S]-[ferredoxin] + NADH. It participates in aromatic compound metabolism; p-cumate degradation; acetaldehyde and pyruvate from p-cumate. Component of the p-cumate 2,3-dioxygenase multicomponent enzyme system which catalyzes the incorporation of both atoms of molecular oxygen into p-cumate to form cis-2,3-dihydroxy-2,3-dihydro-p-cumate. Ferredoxin reductase catalyzes the transfer of electrons from NADH to ferredoxin (CmtAd). In Pseudomonas putida (Arthrobacter siderocapsulatus), this protein is p-cumate 2,3-dioxygenase system, ferredoxin--NAD(+) reductase component.